The primary structure comprises 155 residues: DNA-directed RNA polymerase 1A (155 aa).

Asp88 is an active-site residue.

It belongs to the phage and mitochondrial RNA polymerase family.

It catalyses the reaction RNA(n) + a ribonucleoside 5'-triphosphate = RNA(n+1) + diphosphate. Its function is as follows. DNA-dependent RNA polymerase catalyzes the transcription of DNA into RNA using the four ribonucleoside triphosphates as substrates. The sequence is that of DNA-directed RNA polymerase 1A (RPOT1-SYL) from Nicotiana tabacum (Common tobacco).